The following is a 263-amino-acid chain: Bradykinin-potentiating and C-type natriuretic peptides (263 aa).

An N-terminal signal peptide occupies residues 1–23 (MFVSRLAASGLLLLALMALSLDG). The propeptide occupies 24–30 (KPVQQWS). Residue Q31 is modified to Pyrrolidone carboxylic acid. Residues 42–48 (LVVQQWS) constitute a propeptide that is removed on maturation. Q49 is subject to Pyrrolidone carboxylic acid. Residues 60-66 (LVVQQWS) constitute a propeptide that is removed on maturation. A Pyrrolidone carboxylic acid modification is found at Q67. Residues 78-84 (LVVQQWS) constitute a propeptide that is removed on maturation. Position 85 is a pyrrolidone carboxylic acid (Q85). Residues 89 to 95 (PRPKIPP) are angiotensin-converting enzyme active site binding. Positions 96-102 (LVVQQWS) are excised as a propeptide. The residue at position 103 (Q103) is a Pyrrolidone carboxylic acid. Residues 107–113 (PRPKIPP) form an angiotensin-converting enzyme active site binding region. A propeptide spanning residues 114 to 116 (LVV) is cleaved from the precursor. At Q117 the chain carries Pyrrolidone carboxylic acid. Positions 128–130 (LLL) are excised as a propeptide. Q131 is subject to Pyrrolidone carboxylic acid. Residues 137–241 (AGGTTALREE…ARRLKGLVKK (105 aa)) constitute a propeptide that is removed on maturation. 2 disordered regions span residues 152–171 (EAAS…GSKA) and 177–205 (RLSK…GKQA). The span at 181 to 192 (SKGASATSASAS) shows a compositional bias: low complexity. Over residues 194-204 (PMRDLRTDGKQ) the composition is skewed to basic and acidic residues. Cysteines 247 and 263 form a disulfide.

It in the N-terminal section; belongs to the bradykinin-potentiating peptide family. The protein in the C-terminal section; belongs to the natriuretic peptide family. Expressed by the venom gland.

It is found in the secreted. Its function is as follows. Inhibits the rabbit lung angiotensin-converting enzyme (ACE) (IC(50)=15 uM). Contracts the rat gastric fundus smooth muscle in a rapid and transient manner. Causes no contraction of the rat gastric fundus smooth muscle even at high concentrations. Causes very weak contraction of the isolated guinea pig ileum. Causes weak contraction on rat uterus. Functionally, inhibits the activity of the angiotensin-converting enzyme (ACE) by a preferential interaction with its C-domain (Ki=30 nM, IC(50)=1.1 uM). It binds ACE in a zinc-independent manner. Also potentiates the hypotensive effects of bradykinin. Causes high contraction of the isolated guinea pig ileum and weak contraction on rat uterus. In terms of biological role, inhibits the activity of the angiotensin-converting enzyme (ACE) by interacting with the same potency to its C- and N-domains. Inhibits the rabbit lung angiotensin-converting enzyme (ACE) (IC(50)=7.1 uM). Causes weak contraction of the isolated guinea pig ileum. Causes weak contraction on rat uterus. Its function is as follows. Inhibits the rabbit lung angiotensin-converting enzyme (ACE) (IC(50)=46 uM). Synthetic Leu3-blomhotin contracts the rat gastric fundus smooth muscle in a rapid and transient manner. Causes moderate contraction of the isolated guinea pig ileum. Causes weak contraction on rat uterus. Causes weak contraction of the isolated guinea pig ileum. Causes about 50-fold more potentiating activity on rat uterus than on guinea pig ileum. Functionally, synthetic peptide potentiates the bradykinin in vivo. In terms of biological role, synthetic peptide does not show any bradykinin-potentiating effects. Its function is as follows. has a vasorelaxant activity in rat aortic strips and a diuretic potency in anesthetized rats. May act by activating natriuretic receptors (NPR1 and/or NPR2). This Gloydius blomhoffii (Mamushi) protein is Bradykinin-potentiating and C-type natriuretic peptides.